The sequence spans 474 residues: Gamma-aminobutyric acid receptor subunit beta-1 (474 aa).

The first 25 residues, 1–25 (MWTVQNRESLGLLSFPVMVAMVCCA), serve as a signal peptide directing secretion. The Extracellular portion of the chain corresponds to 26 to 245 (HSSNEPSNMS…SFRLKRNIGY (220 aa)). 2 N-linked (GlcNAc...) asparagine glycosylation sites follow: Asn-33 and Asn-105. A histamine-binding site is contributed by Tyr-122. Cys-161 and Cys-175 are disulfide-bonded. N-linked (GlcNAc...) asparagine glycosylation occurs at Asn-174. Residues 181 to 182 (SY) and Thr-227 contribute to the histamine site. 4-aminobutanoate is bound by residues Tyr-182 and Thr-227. A run of 3 helical transmembrane segments spans residues 246–267 (FILQ…SFWI), 271–293 (ASAA…STHL), and 305–327 (AIDI…YAFV). Topologically, residues 328–451 (NYIFFGKGPQ…DLTDVNSIDK (124 aa)) are cytoplasmic. A helical membrane pass occupies residues 452-473 (WSRMFFPITFSLFNVVYWLYYV).

Belongs to the ligand-gated ion channel (TC 1.A.9) family. Gamma-aminobutyric acid receptor (TC 1.A.9.5) subfamily. GABRB1 sub-subfamily. In terms of assembly, heteropentamer, formed by a combination of alpha (GABRA1-6), beta (GABRB1-3), gamma (GABRG1-3), delta (GABRD), epsilon (GABRE), rho (GABRR1-3), pi (GABRP) and theta (GABRQ) chains, each subunit exhibiting distinct physiological and pharmacological properties. Binds UBQLN1.

It is found in the postsynaptic cell membrane. The protein localises to the cell membrane. It catalyses the reaction chloride(in) = chloride(out). With respect to regulation, potentiated by histamine. Beta subunit of the heteropentameric ligand-gated chloride channel gated by gamma-aminobutyric acid (GABA), a major inhibitory neurotransmitter in the brain. GABA-gated chloride channels, also named GABA(A) receptors (GABAAR), consist of five subunits arranged around a central pore and contain GABA active binding site(s) located at the alpha and beta subunit interface(s). When activated by GABA, GABAARs selectively allow the flow of chloride anions across the cell membrane down their electrochemical gradient. Chloride influx into the postsynaptic neuron following GABAAR opening decreases the neuron ability to generate a new action potential, thereby reducing nerve transmission. Beta-containing GABAARs can simultaneously bind GABA and histamine where histamine binds at the interface of two neighboring beta subunits, which may be involved in the regulation of sleep and wakefulness. In Mus musculus (Mouse), this protein is Gamma-aminobutyric acid receptor subunit beta-1.